The following is a 351-amino-acid chain: Outer membrane porin PhoE (351 aa).

An N-terminal signal peptide occupies residues 1–21 (MKKSTLALVVMGITASASVQA).

It belongs to the Gram-negative porin family. Homotrimer.

It localises to the cell outer membrane. Functionally, uptake of inorganic phosphate, phosphorylated compounds, and some other negatively charged solutes. This Citrobacter freundii protein is Outer membrane porin PhoE (phoE).